A 565-amino-acid polypeptide reads, in one-letter code: Mitochondrial distribution and morphology protein 34 (565 aa).

Residues 1–208 (MAFNFNWSPL…VPEYRDRESE (208 aa)) enclose the SMP-LTD domain. The segment covering 209–220 (SVNTLDLSSESG) has biased composition (polar residues). Disordered regions lie at residues 209-241 (SVNT…GNAL), 347-463 (FGSY…SRSA), and 533-565 (MQEQ…AYGH). Over residues 353–367 (PGRHSRSHTKKRKKR) the composition is skewed to basic residues. The segment covering 368–378 (VVDLRRPKTTD) has biased composition (basic and acidic residues). Residues 382-391 (SVSGDSVFSS) show a composition bias toward low complexity. Composition is skewed to polar residues over residues 392 to 402 (ENATSAPTIFS) and 439 to 463 (QGDQ…SRSA).

The protein belongs to the MDM34 family. In terms of assembly, component of the ER-mitochondria encounter structure (ERMES) or MDM complex, composed of mmm1, mdm10, mdm12 and mdm34.

It localises to the mitochondrion outer membrane. Its function is as follows. Component of the ERMES/MDM complex, which serves as a molecular tether to connect the endoplasmic reticulum (ER) and mitochondria. Components of this complex are involved in the control of mitochondrial shape and protein biogenesis, and function in nonvesicular lipid trafficking between the ER and mitochondria. Mdm34 is required for the interaction of the ER-resident membrane protein mmm1 and the outer mitochondrial membrane-resident beta-barrel protein mdm10. This chain is Mitochondrial distribution and morphology protein 34, found in Talaromyces marneffei (strain ATCC 18224 / CBS 334.59 / QM 7333) (Penicillium marneffei).